Here is a 324-residue protein sequence, read N- to C-terminus: Porphobilinogen deaminase (324 aa).

The residue at position 246 (cysteine 246) is an S-(dipyrrolylmethanemethyl)cysteine. An insert region spans residues 261-279; sequence GQAPEEGGRAAASQAPAAL.

It belongs to the HMBS family. Monomer. Dipyrromethane serves as cofactor.

The catalysed reaction is 4 porphobilinogen + H2O = hydroxymethylbilane + 4 NH4(+). It participates in porphyrin-containing compound metabolism; protoporphyrin-IX biosynthesis; coproporphyrinogen-III from 5-aminolevulinate: step 2/4. Tetrapolymerization of the monopyrrole PBG into the hydroxymethylbilane pre-uroporphyrinogen in several discrete steps. The protein is Porphobilinogen deaminase (hemC) of Paenibacillus macerans (Bacillus macerans).